A 430-amino-acid polypeptide reads, in one-letter code: Tol-Pal system protein TolB (430 aa).

The N-terminal stretch at 1–21 (MKQALRVAFGFLILWASVLHA) is a signal peptide.

It belongs to the TolB family. In terms of assembly, the Tol-Pal system is composed of five core proteins: the inner membrane proteins TolA, TolQ and TolR, the periplasmic protein TolB and the outer membrane protein Pal. They form a network linking the inner and outer membranes and the peptidoglycan layer.

Its subcellular location is the periplasm. Its function is as follows. Part of the Tol-Pal system, which plays a role in outer membrane invagination during cell division and is important for maintaining outer membrane integrity. TolB occupies a key intermediary position in the Tol-Pal system because it communicates directly with both membrane-embedded components, Pal in the outer membrane and TolA in the inner membrane. The sequence is that of Tol-Pal system protein TolB from Escherichia coli O8 (strain IAI1).